An 83-amino-acid polypeptide reads, in one-letter code: Subtilisin-chymotrypsin inhibitor CI-1B (83 aa).

The segment at 1–28 (MRSMEGSVPKYPEPTEGSIGASGAKRSW) is disordered.

It belongs to the protease inhibitor I13 (potato type I serine protease inhibitor) family.

Functionally, inhibits both subtilisin and chymotrypsin. The chain is Subtilisin-chymotrypsin inhibitor CI-1B from Hordeum vulgare (Barley).